The chain runs to 68 residues: MKKGIHPELKKAKIVCACGAVYETLSTKEYMTVEICSKCHPFFTGQRKFVDTEGRVERFTKKYNWEIK.

Zn(2+) is bound by residues cysteine 16, cysteine 18, cysteine 36, and cysteine 39.

The protein belongs to the bacterial ribosomal protein bL31 family. Type A subfamily. Part of the 50S ribosomal subunit. Zn(2+) serves as cofactor.

Its function is as follows. Binds the 23S rRNA. The chain is Large ribosomal subunit protein bL31 from Dictyoglomus turgidum (strain DSM 6724 / Z-1310).